The sequence spans 407 residues: Cytochrome P450-pinF2, plant-inducible (407 aa).

Cysteine 356 provides a ligand contact to heme.

It belongs to the cytochrome P450 family. Requires heme as cofactor.

Its function is as follows. Not essential for virulence, but may be involved in the detoxification of plant protective agents at the site of wounding. This is Cytochrome P450-pinF2, plant-inducible (cyp104) from Rhizobium radiobacter (Agrobacterium tumefaciens).